Consider the following 617-residue polypeptide: Dihydroxy-acid dehydratase (617 aa).

Position 81 (Asp-81) interacts with Mg(2+). [2Fe-2S] cluster is bound at residue Cys-122. Mg(2+)-binding residues include Asp-123 and Lys-124. N6-carboxylysine is present on Lys-124. Cys-195 serves as a coordination point for [2Fe-2S] cluster. Residue Glu-492 coordinates Mg(2+). Ser-518 functions as the Proton acceptor in the catalytic mechanism.

The protein belongs to the IlvD/Edd family. Homodimer. [2Fe-2S] cluster is required as a cofactor. Mg(2+) serves as cofactor.

The enzyme catalyses (2R)-2,3-dihydroxy-3-methylbutanoate = 3-methyl-2-oxobutanoate + H2O. The catalysed reaction is (2R,3R)-2,3-dihydroxy-3-methylpentanoate = (S)-3-methyl-2-oxopentanoate + H2O. It participates in amino-acid biosynthesis; L-isoleucine biosynthesis; L-isoleucine from 2-oxobutanoate: step 3/4. Its pathway is amino-acid biosynthesis; L-valine biosynthesis; L-valine from pyruvate: step 3/4. Its function is as follows. Functions in the biosynthesis of branched-chain amino acids. Catalyzes the dehydration of (2R,3R)-2,3-dihydroxy-3-methylpentanoate (2,3-dihydroxy-3-methylvalerate) into 2-oxo-3-methylpentanoate (2-oxo-3-methylvalerate) and of (2R)-2,3-dihydroxy-3-methylbutanoate (2,3-dihydroxyisovalerate) into 2-oxo-3-methylbutanoate (2-oxoisovalerate), the penultimate precursor to L-isoleucine and L-valine, respectively. The sequence is that of Dihydroxy-acid dehydratase from Xanthobacter autotrophicus (strain ATCC BAA-1158 / Py2).